Reading from the N-terminus, the 519-residue chain is MATTTLNDSVTTTLASEPQRTYQVVVAATKEMGIGKDGKLPWNLPTDLKFFKDITLTTSDSSKKNAVVMGRKTWESIPIKYRPLSGRLNVVLTRSGGFDIANTENVVTCSSVDSALDLLAAPPYCLSIERVFVIGGGDILREALNRPSCDAIHLTEIDTSVDCDTFIPAIDTSVYQPWSSSFPVTENGLRFCFTTFVRVKSSADESSDESNGSQSLQFDGKKFLFLPKMVFDQHEEFLYLNMVEDIISNGNVKNDRTGTGTLSKFGCQMKFNLRRSFPLLTTKRVFWRGVVEELLWFISGSTNAKVLQEKGIHIWDGNASREYLDGIGLTEREEGDLGPVYGFQWRHFGAKYTDMHADYTGQGFDQLVDVIDKIKNNPDDRRIIMSAWNPSDLKLMALPPCHMFAQFYVAEGELSCQMYQRSADMGLGVPFNIASYSLLTCMLAHVCDLVPGDFIHVLGDAHVYKTHVRPLQEQLLNLPKPFPVMKINPEKKQIDSFVASDFDLTGYDPHKKIEMKMAV.

Position 2 is an N-acetylalanine (A2). The 178-residue stretch at 21–198 (TYQVVVAATK…LRFCFTTFVR (178 aa)) folds into the DHFR domain. Residue V25 participates in substrate binding. Residues A27 and 33–39 (GIGKDGK) each bind NADP(+). D47 contributes to the substrate binding site. Residues 71 to 73 (RKT) and 92 to 95 (LTRS) each bind NADP(+). I134 contributes to the substrate binding site. 135 to 142 (GGGDILRE) lines the NADP(+) pocket. A substrate-binding site is contributed by T155. The hinge stretch occupies residues 201–234 (SSADESSDESNGSQSLQFDGKKFLFLPKMVFDQH). Positions 235–519 (EEFLYLNMVE…HKKIEMKMAV (285 aa)) are thymidylate synthase. Position 256 (R256) interacts with dUMP. C401 is a catalytic residue. DUMP contacts are provided by residues H402, 420–424 (QRSAD), N432, and 462–464 (HVY).

The protein in the N-terminal section; belongs to the dihydrofolate reductase family. It in the C-terminal section; belongs to the thymidylate synthase family. In terms of assembly, heterodimer or homodimer.

The catalysed reaction is (6S)-5,6,7,8-tetrahydrofolate + NADP(+) = 7,8-dihydrofolate + NADPH + H(+). The enzyme catalyses dUMP + (6R)-5,10-methylene-5,6,7,8-tetrahydrofolate = 7,8-dihydrofolate + dTMP. Its pathway is cofactor biosynthesis; tetrahydrofolate biosynthesis; 5,6,7,8-tetrahydrofolate from 7,8-dihydrofolate: step 1/1. In terms of biological role, bifunctional enzyme. Involved in de novo dTMP biosynthesis. Key enzyme in folate metabolism. Can play two different roles depending on the source of dihydrofolate: de novo synthesis of tetrahydrofolate or recycling of the dihydrofolate released as one of the end products of the TS catalyzed reaction. Catalyzes an essential reaction for de novo glycine and purine synthesis, DNA precursor synthesis, and for the conversion of dUMP to dTMP. In Arabidopsis thaliana (Mouse-ear cress), this protein is Bifunctional dihydrofolate reductase-thymidylate synthase 1 (THY-1).